The chain runs to 353 residues: Deoxyhypusine synthase (353 aa).

NAD(+) is bound by residues 90–94, 116–118, Glu122, and Asp228; these read SNLIS and TAG. 121–122 provides a ligand contact to spermidine; it reads EE. Asp233 serves as a coordination point for spermidine. Gly275 provides a ligand contact to NAD(+). His280 provides a ligand contact to spermidine. 300–301 lines the NAD(+) pocket; the sequence is TA. Spermidine is bound by residues 306–308 and 315–321; these read GSD and EAVSWGK. Lys321 acts as the Nucleophile in catalysis. Residue 334-335 participates in NAD(+) binding; sequence EA.

Belongs to the deoxyhypusine synthase family. As to quaternary structure, homotetramer. NAD(+) is required as a cofactor.

The enzyme catalyses [eIF5A protein]-L-lysine + spermidine = [eIF5A protein]-deoxyhypusine + propane-1,3-diamine. The protein operates within protein modification; eIF5A hypusination. In terms of biological role, catalyzes the NAD-dependent oxidative cleavage of spermidine and the subsequent transfer of the butylamine moiety of spermidine to the epsilon-amino group of a specific lysine residue of the eIF-5A precursor protein to form the intermediate deoxyhypusine residue. This chain is Deoxyhypusine synthase (dys-1), found in Neurospora crassa (strain ATCC 24698 / 74-OR23-1A / CBS 708.71 / DSM 1257 / FGSC 987).